Reading from the N-terminus, the 130-residue chain is Protein ApaG (130 aa).

The ApaG domain maps to 3-127 (RALTRDIEVV…FSLDSPGLLR (125 aa)). The interval 63 to 83 (EVTGPGVVGEQPRLSPGDTYE) is disordered.

The protein is Protein ApaG of Rhizobium etli (strain ATCC 51251 / DSM 11541 / JCM 21823 / NBRC 15573 / CFN 42).